The chain runs to 100 residues: Apolipoprotein C-II (100 aa).

The N-terminal stretch at 1–22 (MGSRFLLALFLILLVLGCEVQA) is a signal peptide. The tract at residues 66-74 (SVDEKLRDM) is lipid binding. The tract at residues 78-100 (SSAAMTTYASIFTDQILTLLKGE) is lipoprotein lipase cofactor.

This sequence belongs to the apolipoprotein C2 family. In terms of processing, proapolipoprotein C-II is synthesized as a sialic acid containing glycoprotein which is subsequently desialylated prior to its proteolytic processing. Proapolipoprotein C-II, the major form found in plasma undergoes proteolytic cleavage of its N-terminal hexapeptide to generate the mature form apolipoprotein C-II, which occurs as the minor form in plasma.

The protein resides in the secreted. Functionally, component of chylomicrons, very low-density lipoproteins (VLDL), low-density lipoproteins (LDL), and high-density lipoproteins (HDL) in plasma. Plays an important role in lipoprotein metabolism as an activator of lipoprotein lipase. In Microtus ochrogaster (Prairie vole), this protein is Apolipoprotein C-II (APOC2).